The chain runs to 266 residues: MFKLLSKLLVYLTASIMAIASPLAFSVDSSGEYPTVSEIPVGEVRLYQIADGVWSHIATQSFDGAVYPSNGLIVRDGDELLLIDTAWGAKNTAALLAEIEKQIGLPVTRAVSTHFHDDRVGGVDVLRAAGVATYASPSTRRLAEVEGNEIPTHSLEGLSSSGDAVRFGPVELFYPGAAHSTDNLVVYVPSASVLYGGCAIYELSRTSAGNVADADLAEWPTSIERIQQHYPEAQFVIPGHGLPGGLDLLKHTTNVVKAHTNRSVVE.

Residues 1–20 (MFKLLSKLLVYLTASIMAIA) form the signal peptide. The Zn(2+) site is built by histidine 114, histidine 116, and cysteine 198.

The protein belongs to the metallo-beta-lactamase superfamily. Class-B beta-lactamase family. As to quaternary structure, monomer. Zn(2+) serves as cofactor.

The protein resides in the periplasm. It catalyses the reaction a beta-lactam + H2O = a substituted beta-amino acid. Inhibited by chelating agents such as EDTA. Inhibited by a fungal natural product, aspergillomarasmine A (AMA). Inhibited by 2-triazolylthioacetamides. Functionally, class B beta-lactamase which confers resistance to the beta-lactam antibiotics, including penicillins, cephalosporins and carbapenems. Acts via hydrolysis of the beta-lactam ring. Has penicillin-, cephalosporin- and carbapenem-hydrolyzing activities. The protein is Metallo-beta-lactamase VIM-2 of Escherichia coli.